The chain runs to 600 residues: MATQLIENKLKLLPEKPGCYLMKDINGTVIYVGKSKNLKNRVRSYFKSKQVGRRAELVREIRDYDIITVSTDKEAFLLEITLIKKYQPYYNVQLKQGTGYPYIEITREHDPQTRLTSIVCKDGGYYFGPYPNVYAAQATLKFIQKVFPLRRCHGYQGRPCLYYHMGQCLGACFKKVPQKEYDEQIKKIKRFLNGDIGAVKQDLTQKMEQASEQLEFERAAEIRDQLKYIEETVEKQKIISNDNTQRDIFNYYVDKSWISIQIFFLRQAKLLRRETRMFPLTDITDPEDAFTSFIVQFYGQKNRVLPKEVLIPAGFDNDTLAEVLTVPVRTPQRGQKKSLLDMAKDNAKLKLDDKFRLLELGNRKTKGAQKEIFDALGLPYGHIIESFDHSHIQGADPVSALVVFKDGEPDKTAYRKYKLKGEVEHQNGGDEVRNTREVVRRRYGRLLREHKKMPDLILMDGGQIQVDACEDVLRNELNLNIPVAGMVKDDKHRTNHLLFGDPINGVPLKLIPLNPKSEGFYLMTRIQDEVHRFAITFHRRRHAKNALSSRLDSIKGIGPKSRNKLLRKFGSLKKIKEASVDDLRAAGLTLPQAQTVKLML.

Residues 15–92 (EKPGCYLMKD…IKKYQPYYNV (78 aa)) form the GIY-YIG domain. A UVR domain is found at 197 to 232 (GAVKQDLTQKMEQASEQLEFERAAEIRDQLKYIEET).

The protein belongs to the UvrC family. In terms of assembly, interacts with UvrB in an incision complex.

Its subcellular location is the cytoplasm. The UvrABC repair system catalyzes the recognition and processing of DNA lesions. UvrC both incises the 5' and 3' sides of the lesion. The N-terminal half is responsible for the 3' incision and the C-terminal half is responsible for the 5' incision. The chain is UvrABC system protein C from Lactobacillus helveticus (strain DPC 4571).